A 378-amino-acid polypeptide reads, in one-letter code: UDP-N-acetylglucosamine 2-epimerase (378 aa).

The active site involves His-214.

It belongs to the UDP-N-acetylglucosamine 2-epimerase family.

The catalysed reaction is UDP-N-acetyl-alpha-D-glucosamine = UDP-N-acetyl-alpha-D-mannosamine. It participates in bacterial outer membrane biogenesis; LPS O-antigen biosynthesis. The sequence is that of UDP-N-acetylglucosamine 2-epimerase (rfbC) from Salmonella borreze.